The following is a 1368-amino-acid chain: DNA-directed RNA polymerase subunit beta (1368 aa).

It belongs to the RNA polymerase beta chain family. The RNAP catalytic core consists of 2 alpha, 1 beta, 1 beta' and 1 omega subunit. When a sigma factor is associated with the core the holoenzyme is formed, which can initiate transcription.

The enzyme catalyses RNA(n) + a ribonucleoside 5'-triphosphate = RNA(n+1) + diphosphate. In terms of biological role, DNA-dependent RNA polymerase catalyzes the transcription of DNA into RNA using the four ribonucleoside triphosphates as substrates. This chain is DNA-directed RNA polymerase subunit beta, found in Paraburkholderia xenovorans (strain LB400).